A 627-amino-acid chain; its full sequence is MIRYTVAGHSRRCVVGASKRVGAIKCITVAATKRFISNKPNEVFTKLTNDNDPKRDAFFKYTWGSWLKNDKQEKEKRFTKFSIEGLNRILNDIYIQSNEMAKAPDGKILPPVFNKNLTVSLVNNVVPKNIGKINPNEKVQVTTLSSIHEGKHHRIYKVDTNLNKAFILRIPYPLENENTLSYRIRSEVATMDFADLKLGIKVPKIFCYGVNSLNPVRQPFVLQEFIEGELLMKDWDPLIEDGSSNQKKYDNVIKQVSDFQSKLVSLKLNAFGSIYFNNDLKDGNEKEFVKEDIYDGETNPDLQNRWKIGPSVERCLWRHKSHLDFHKQMKPFLGPWPKKSPMDIIKNTGLLEAENAKTRIAMKEAGSSAELMYPRTLKEQITTYENLAKIAPDLFNVKTKAIPNMQELLSPRLFHPDLDPMNIIVNKEAQEAYLLDFEGACTKPFILQNSPQFIAYDGPKIYDLKEDITDFDKLSEAEKAQYQFMYKRTRNQHQWEKKLNDNNPKLITAVAPPVKLLRSPYIAAVERKTEEEYLLIDESLLQLKEVWDIFAQNDLVNQKKFPLNYSKEDIERHVEDLQKLHEKLISTPFAATQGWIPQDMFDQLLNSGSIVKQENGDYTVKQPEATK.

A mitochondrion-targeting transit peptide spans 1–43 (MIRYTVAGHSRRCVVGASKRVGAIKCITVAATKRFISNKPNEV).

Belongs to the AIM9 family.

The protein localises to the mitochondrion. In Saccharomyces cerevisiae (strain YJM789) (Baker's yeast), this protein is Altered inheritance of mitochondria protein 9, mitochondrial (AIM9).